The chain runs to 506 residues: Aminoaldehyde dehydrogenase 2 (506 aa).

Asp101 lines the Na(+) pocket. NAD(+)-binding positions include 161–163 (TPW) and 187–190 (KPSE). Leu191 contacts Na(+). Residues 241–244 (STET) and Glu262 contribute to the NAD(+) site. Glu262 serves as the catalytic Proton acceptor. Cys297 acts as the Nucleophile in catalysis. Positions 396 and 462 each coordinate NAD(+).

It belongs to the aldehyde dehydrogenase family.

It carries out the reaction 4-aminobutanal + NAD(+) + H2O = 4-aminobutanoate + NADH + 2 H(+). The catalysed reaction is 3-aminopropanal + NAD(+) + H2O = beta-alanine + NADH + 2 H(+). The enzyme catalyses 4-(trimethylamino)butanal + NAD(+) + H2O = 4-(trimethylamino)butanoate + NADH + 2 H(+). It catalyses the reaction 4-guanidinobutanal + NAD(+) + H2O = 4-guanidinobutanoate + NADH + 2 H(+). Its pathway is amine and polyamine biosynthesis; betaine biosynthesis via choline pathway; betaine from betaine aldehyde: step 1/1. Functionally, dehydrogenase that catalyzes the oxidation of several aminoaldehydes. Metabolizes and detoxifies aldehyde products of polyamine degradation to non-toxic amino acids. Catalyzes the oxidation of 4-aminobutanal and 3-aminopropanal to 4-aminobutanoate and beta-alanine, respectively. Catalyzes the oxidation of 4-(trimethylamino)butanal and 4-guanidinobutanal to 4-trimethylammoniobutanoate and 4-guanidinobutanoate, respectively. The sequence is that of Aminoaldehyde dehydrogenase 2 from Zea mays (Maize).